Consider the following 430-residue polypeptide: Enolase (430 aa).

Gln163 lines the (2R)-2-phosphoglycerate pocket. The active-site Proton donor is the Glu205. Positions 242, 286, and 313 each coordinate Mg(2+). (2R)-2-phosphoglycerate contacts are provided by Lys338, Arg367, Ser368, and Lys389. Lys338 acts as the Proton acceptor in catalysis.

It belongs to the enolase family. Requires Mg(2+) as cofactor.

The protein resides in the cytoplasm. It is found in the secreted. Its subcellular location is the cell surface. It carries out the reaction (2R)-2-phosphoglycerate = phosphoenolpyruvate + H2O. The protein operates within carbohydrate degradation; glycolysis; pyruvate from D-glyceraldehyde 3-phosphate: step 4/5. Its function is as follows. Catalyzes the reversible conversion of 2-phosphoglycerate (2-PG) into phosphoenolpyruvate (PEP). It is essential for the degradation of carbohydrates via glycolysis. The chain is Enolase from Symbiobacterium thermophilum (strain DSM 24528 / JCM 14929 / IAM 14863 / T).